The following is a 228-amino-acid chain: Glucose-induced degradation protein 8 homolog (228 aa).

Residues 29-61 (SKSDLNKLVMNYLVIEGYQEAAAKFQEESSTQT) form the LisH domain. One can recognise a CTLH domain in the interval 67–124 (SIADRMAIRSAIQCGDVEKGIEIVNDLNPEILDTNPQLYFHLQQQKLIELIRKGMTAE).

It belongs to the GID8 family.

The protein localises to the cytoplasm. It localises to the nucleus. In terms of biological role, core component of the CTLH E3 ubiquitin-protein ligase complex that mediates ubiquitination and subsequent proteasomal degradation of target proteins. Acts as a positive regulator of Wnt signaling pathway by promoting beta-catenin (CTNNB1) nuclear accumulation. The protein is Glucose-induced degradation protein 8 homolog of Dictyostelium discoideum (Social amoeba).